Consider the following 154-residue polypeptide: MSEKYVVTWDMFQMHTRKLSERLLPATQWKGIIAVSRGGLFPAAVIARELGIRHIETVCISSYDHNQQGNLNVLHAAQVKNGGEGFIVVDDLVDTGNTARAIRELYPNARFVTVFAKPAGANLVDDYVIDIPQNTWIEQPWDMGITFVPPLARK.

5-phospho-alpha-D-ribose 1-diphosphate-binding positions include 37–38 and 90–98; these read RG and DDLVDTGNT. Residue D91 participates in Mg(2+) binding. Guanine-binding residues include D94 and I137. Positions 94 and 137 each coordinate xanthine. GMP contacts are provided by residues 94–98 and 136–137; these read DTGNT and WI.

It belongs to the purine/pyrimidine phosphoribosyltransferase family. XGPT subfamily. As to quaternary structure, homotetramer. Requires Mg(2+) as cofactor.

The protein localises to the cell inner membrane. The enzyme catalyses GMP + diphosphate = guanine + 5-phospho-alpha-D-ribose 1-diphosphate. The catalysed reaction is XMP + diphosphate = xanthine + 5-phospho-alpha-D-ribose 1-diphosphate. It carries out the reaction IMP + diphosphate = hypoxanthine + 5-phospho-alpha-D-ribose 1-diphosphate. The protein operates within purine metabolism; GMP biosynthesis via salvage pathway; GMP from guanine: step 1/1. It participates in purine metabolism; XMP biosynthesis via salvage pathway; XMP from xanthine: step 1/1. Functionally, purine salvage pathway enzyme that catalyzes the transfer of the ribosyl-5-phosphate group from 5-phospho-alpha-D-ribose 1-diphosphate (PRPP) to the N9 position of the 6-oxopurines guanine and xanthine to form the corresponding ribonucleotides GMP (guanosine 5'-monophosphate) and XMP (xanthosine 5'-monophosphate), with the release of PPi. To a lesser extent, also acts on hypoxanthine. This Histophilus somni (strain 129Pt) (Haemophilus somnus) protein is Xanthine-guanine phosphoribosyltransferase.